The following is a 2535-amino-acid chain: Piezo-type mechanosensitive ion channel component 1 (2535 aa).

3 helical membrane-spanning segments follow: residues 13–25 (LLLPCTLLAASLL), 29–44 (ALSLVYLLFLLLLPWL), and 59–81 (LLRALLCLSLLFLVAHVAFQICL). N-linked (GlcNAc...) asparagine glycosylation occurs at asparagine 100. 5 consecutive transmembrane segments (helical) span residues 122–138 (VAPDLGVLVASSLCLGL), 193–212 (LLVTSGRMLVIVLLALAGIA), 215–234 (SAFSSVYLMVFLAICTWWSC), 246–266 (LCVMVSCFGAGHLVCLYCYQT), and 308–328 (WPIYVSPGILLLLYYTATSLL). A compositionally biased stretch (acidic residues) spans 346–357 (DEEHELELDQLE). Residues 346-377 (DEEHELELDQLEPEPQARGTTQGATPTTTGPD) are disordered. The segment covering 358–376 (PEPQARGTTQGATPTTTGP) has biased composition (low complexity). N-linked (GlcNAc...) asparagine glycosylation is present at asparagine 380. Transmembrane regions (helical) follow at residues 416–436 (LILDQSYVCALIAMMVWSIMY), 439–454 (WLTFVLLLWACLIWTV), 460–482 (LAMLCSPCILLYGLTLCCLRYVW), 510–527 (CLDLGAMLLYLLTFWLLL), 572–592 (IYVKYWIYVCAGMFIVVSFAG), 594–614 (LVVYKIVYMFLFLLCLTLFQV), 625–646 (VFWWLVVAYTMLVLIAVYTFQF), and 677–693 (LFSSILIPGFFLLACIL). Serine 749 carries the phosphoserine modification. A run of 12 helical transmembrane segments spans residues 803-814 (LVALYTVWVALK), 818-831 (VMNLLLVVLWAFAL), 846-860 (VWTCIIIVCKMLYQL), 913-940 (GYIQNHLQILLLLVFEAVVYRRQEHYRR), 981-996 (GLEICFLMAVNVIGQR), 999-1014 (FMVILHGCWLVAILTR), 1028-1043 (CLFLTLFLLYQYLLCL), 1083-1104 (TNLISDFLLLLCASQQWQVFSA), 1140-1166 (YLDMLKVAVFRYLFWLVLVVVFVTGAT), 1172-1190 (GLGYLLACFYLLLFGTTLL), 1204-1222 (LILYNVTVIISKNMLSLLS), and 1272-1288 (IWDSICFFFLLLQRRVF). Residues 1325–1356 (HRQTEERSLAQLKRQMKRIRAKQEKYRQSQAS) are a coiled coil. Disordered regions lie at residues 1345 to 1383 (AKQEKYRQSQASRGQLQSTDPQEPGPDSPGGSSPPRTQW) and 1556 to 1597 (SGPV…NTRS). A compositionally biased stretch (polar residues) spans 1352–1365 (QSQASRGQLQSTDP). Serine 1372 and serine 1377 each carry phosphoserine. Positions 1579–1597 (SSMTDDTGSPLSTGYNTRS) are enriched in polar residues. Serine 1614, serine 1618, and serine 1633 each carry phosphoserine. 4 helical membrane-spanning segments follow: residues 1644 to 1687 (PELE…LNHM), 1692 to 1707 (AASLVLPVLVFLWAML), 1716 to 1734 (FWMTAIVFTEVMVVTKYLF), and 1767 to 1788 (DSYIKYDLVQLMALFFHRSQLL). 2 stretches are compositionally biased toward basic and acidic residues: residues 1801–1811 (PKDHCRSSEKD) and 1842–1867 (PKDHIQGKGSVRSKDEIQDPPEDLKP). The segment at 1801–1911 (PKDHCRSSEK…GREAAGRKRL (111 aa)) is disordered. The segment covering 1868–1881 (QHRRHISIRFRRRK) has biased composition (basic residues). 5 helical membrane passes run 1965-1984 (YALMFLADIVDIVVIIFGFW), 2005-2021 (PQAFLFMLLVQFGTMVI), 2036-2056 (AFQVVLVVAIHLWMFFILPAV), 2065-2080 (AVAQLWYFVKCIYFAL), and 2181-2201 (GLIILFLIAIIWFPLLFMSLI). A disulfide bridge links cysteine 2425 with cysteine 2429. The helical transmembrane segment at 2446 to 2466 (LGFLAGYGIVGLYVSIVLVVG) threads the bilayer.

This sequence belongs to the PIEZO (TC 1.A.75) family. As to quaternary structure, homotrimer; the homotrimer forms a propeller-shaped Piezo channel with a cation-ion conducting pore. Heterotrimeric interaction may occur between PIEZO1 and PIEZO2. Interacts with PKD2. Interacts with STOM13. Interacts with TMC1, TMC2, PCDH15 and CIB2; the interaction may be part of the MET complex. Interacts with MDFIC (via C-terminus); the interaction prolongs Piezo channel inactivation. Interacts with MDFI (via C-terminus); the interaction prolongs Piezo channel inactivation. Moderate expression in lung and kidney. Very weak expression in heart, spleen and liver.

It localises to the endoplasmic reticulum membrane. The protein localises to the endoplasmic reticulum-Golgi intermediate compartment membrane. Its subcellular location is the cell membrane. The protein resides in the cell projection. It is found in the lamellipodium membrane. It carries out the reaction K(+)(in) = K(+)(out). The catalysed reaction is Na(+)(in) = Na(+)(out). The enzyme catalyses Ca(2+)(in) = Ca(2+)(out). It catalyses the reaction Mg(2+)(in) = Mg(2+)(out). Its activity is regulated as follows. Regulated by auxillary subunits MDFIC and MDFI. Down-regulated by phosphatidylserines exposed on the cell surface. Divalent ions decrease the single-channel permeability of K(+). In terms of biological role, pore-forming subunit of the mechanosensitive non-specific cation Piezo channel required for rapidly adapting mechanically activated (MA) currents and has a key role in sensing touch and tactile pain. Piezo channels are homotrimeric three-blade propeller-shaped structures that utilize a cap-motion and plug-and-latch mechanism to gate their ion-conducting pathways. Generates currents characterized by a linear current-voltage relationship that are sensitive to ruthenium red and gadolinium. Conductance to monovalent alkali ions is highest for K(+), intermediate for Na(+) and lowest for Li(+). Divalent ions except for Mn(2+) permeate the channel but more slowly than the monovalent ions and they also reduce K(+) currents. Plays a key role in epithelial cell adhesion by maintaining integrin activation through R-Ras recruitment to the ER, most probably in its activated state, and subsequent stimulation of calpain signaling. In inner ear hair cells, PIEZO1/2 subunits may constitute part of the mechanotransducer (MET) non-selective cation channel complex where they may act as pore-forming ion-conducting component in the complex. In the kidney, may contribute to the detection of intraluminal pressure changes and to urine flow sensing. Acts as a shear-stress sensor that promotes endothelial cell organization and alignment in the direction of blood flow through calpain activation. Plays a key role in blood vessel formation and vascular structure in both development and adult physiology. Acts as a sensor of phosphatidylserine (PS) flipping at the plasma membrane and governs morphogenesis of muscle cells. In myoblasts, flippase-mediated PS enrichment at the inner leaflet of plasma membrane triggers channel activation and Ca(2+) influx followed by Rho GTPases signal transduction, leading to assembly of cortical actomyosin fibers and myotube formation. The protein is Piezo-type mechanosensitive ion channel component 1 (Piezo1) of Rattus norvegicus (Rat).